A 356-amino-acid polypeptide reads, in one-letter code: Replication factor C subunit 3 (356 aa).

Position 20 is an N6-acetyllysine (Lys20). Ser125 is modified (phosphoserine).

The protein belongs to the activator 1 small subunits family. In terms of assembly, subunit of the RFC complex, an heteropentameric complex consisting of a large subunit RFC1 and four small subunits RFC2, RFC3, RFC4 and RFC5; the RFC complex interacts with PCNA. Forms an heterotetrameric complex with RFC2, RFC4 and RFC5; this complex has ATPase activity but is not stimulated by PCNA. The heterotetramer of subunits RFC2, RFC3, RFC4 and RFC5 interacts with RAD17. Interacts with CNTD1; this interaction facilitates crossover formation.

It is found in the nucleus. Functionally, subunit of the replication factor C (RFC) complex which acts during elongation of primed DNA templates by DNA polymerases delta and epsilon, and is necessary for ATP-dependent loading of proliferating cell nuclear antigen (PCNA) onto primed DNA. In Bos taurus (Bovine), this protein is Replication factor C subunit 3 (RFC3).